The following is an 882-amino-acid chain: Alanine--tRNA ligase (882 aa).

Residues His-563, His-567, Cys-665, and His-669 each coordinate Zn(2+).

It belongs to the class-II aminoacyl-tRNA synthetase family. The cofactor is Zn(2+).

It localises to the cytoplasm. It catalyses the reaction tRNA(Ala) + L-alanine + ATP = L-alanyl-tRNA(Ala) + AMP + diphosphate. Catalyzes the attachment of alanine to tRNA(Ala) in a two-step reaction: alanine is first activated by ATP to form Ala-AMP and then transferred to the acceptor end of tRNA(Ala). Also edits incorrectly charged Ser-tRNA(Ala) and Gly-tRNA(Ala) via its editing domain. In Synechococcus sp. (strain RCC307), this protein is Alanine--tRNA ligase.